The chain runs to 810 residues: AMP deaminase (810 aa).

Residues 1–10 (MDNQATQRLN) are compositionally biased toward polar residues. 2 disordered regions span residues 1–61 (MDNQ…SHES) and 114–137 (AAMN…PRTL). Phosphoserine occurs at positions 19, 58, and 61. The span at 125–137 (HASQNSGGKPRTL) shows a compositional bias: polar residues. Phosphoserine is present on Ser138. Residues His362 and His364 each coordinate Zn(2+). Substrate is bound by residues His364 and 433-438 (KFNLKY). His630 contacts Zn(2+). Glu633 lines the substrate pocket. The active-site Proton acceptor is the His652. Residue Asp707 participates in Zn(2+) binding. Position 708-711 (708-711 (DPLQ)) interacts with substrate.

The protein belongs to the metallo-dependent hydrolases superfamily. Adenosine and AMP deaminases family. In terms of assembly, homotetramer. The cofactor is Zn(2+).

It catalyses the reaction AMP + H2O + H(+) = IMP + NH4(+). Its pathway is purine metabolism; IMP biosynthesis via salvage pathway; IMP from AMP: step 1/1. AMP deaminase plays a critical role in energy metabolism. In Saccharomyces cerevisiae (strain ATCC 204508 / S288c) (Baker's yeast), this protein is AMP deaminase (AMD1).